Reading from the N-terminus, the 222-residue chain is MRLILLGAPGAGKGTQAKFICERFGIPQISTGDMLRAAVKAGTPLGIEAKKVMDAGGLVSDDIIIGLVKDRLQQSDCKNGYLFDGFPRTIPQAEAMKDAGVPIDYVLEIDVPFDAIIERMSGRRVHVASGRTYHVKYNPPKNEGQDDETGDPLIQRDDDKEETVRKRLSVYENQTRPLVDYYSGWAENGNGAAKVAPPKYRKISGIGNVEDITGRVFGALEA.

10 to 15 serves as a coordination point for ATP; it reads GAGKGT. Positions 30 to 59 are NMP; that stretch reads STGDMLRAAVKAGTPLGIEAKKVMDAGGLV. AMP is bound by residues Thr-31, Arg-36, 57-59, 85-88, and Gln-92; these read GLV and GFPR. The LID stretch occupies residues 122–159; it reads GRRVHVASGRTYHVKYNPPKNEGQDDETGDPLIQRDDD. ATP contacts are provided by residues Arg-123 and 132–133; that span reads TY. The interval 135–162 is disordered; the sequence is VKYNPPKNEGQDDETGDPLIQRDDDKEE. Residues Arg-156 and Arg-167 each coordinate AMP. Residue Gly-207 participates in ATP binding.

Belongs to the adenylate kinase family. As to quaternary structure, monomer.

The protein localises to the cytoplasm. The catalysed reaction is AMP + ATP = 2 ADP. The protein operates within purine metabolism; AMP biosynthesis via salvage pathway; AMP from ADP: step 1/1. Functionally, catalyzes the reversible transfer of the terminal phosphate group between ATP and AMP. Plays an important role in cellular energy homeostasis and in adenine nucleotide metabolism. The protein is Adenylate kinase of Ralstonia nicotianae (strain ATCC BAA-1114 / GMI1000) (Ralstonia solanacearum).